A 367-amino-acid polypeptide reads, in one-letter code: Flagellar P-ring protein (367 aa).

The N-terminal stretch at methionine 1–alanine 21 is a signal peptide.

This sequence belongs to the FlgI family. In terms of assembly, the basal body constitutes a major portion of the flagellar organelle and consists of four rings (L,P,S, and M) mounted on a central rod.

It is found in the periplasm. The protein resides in the bacterial flagellum basal body. Functionally, assembles around the rod to form the L-ring and probably protects the motor/basal body from shearing forces during rotation. The protein is Flagellar P-ring protein of Nitrosococcus oceani (strain ATCC 19707 / BCRC 17464 / JCM 30415 / NCIMB 11848 / C-107).